The chain runs to 125 residues: Large ribosomal subunit protein bL12 (125 aa).

This sequence belongs to the bacterial ribosomal protein bL12 family. As to quaternary structure, homodimer. Part of the ribosomal stalk of the 50S ribosomal subunit. Forms a multimeric L10(L12)X complex, where L10 forms an elongated spine to which 2 to 4 L12 dimers bind in a sequential fashion. Binds GTP-bound translation factors.

Forms part of the ribosomal stalk which helps the ribosome interact with GTP-bound translation factors. Is thus essential for accurate translation. This chain is Large ribosomal subunit protein bL12, found in Heliobacterium modesticaldum (strain ATCC 51547 / Ice1).